The chain runs to 342 residues: tRNA N6-adenosine threonylcarbamoyltransferase (342 aa).

Residues histidine 115 and histidine 119 each contribute to the Fe cation site. Substrate-binding positions include 138-142 (LVSGG), aspartate 171, glycine 184, and asparagine 276. Aspartate 304 provides a ligand contact to Fe cation.

It belongs to the KAE1 / TsaD family. It depends on Fe(2+) as a cofactor.

It localises to the cytoplasm. It catalyses the reaction L-threonylcarbamoyladenylate + adenosine(37) in tRNA = N(6)-L-threonylcarbamoyladenosine(37) in tRNA + AMP + H(+). Required for the formation of a threonylcarbamoyl group on adenosine at position 37 (t(6)A37) in tRNAs that read codons beginning with adenine. Is involved in the transfer of the threonylcarbamoyl moiety of threonylcarbamoyl-AMP (TC-AMP) to the N6 group of A37, together with TsaE and TsaB. TsaD likely plays a direct catalytic role in this reaction. The sequence is that of tRNA N6-adenosine threonylcarbamoyltransferase from Dichelobacter nodosus (strain VCS1703A).